A 670-amino-acid chain; its full sequence is MSISTSLNSASIHLSSMDTHPQLHSLTRQPHSSSTAMSKNEAQESSPSLPASSSSSTSASASASSKNSSKNPSSWDPQDDLLLRHLKEVKKMGWKDISQYFPNRTPNACQFRWRRLKSGNLKSNKTALIDINTYTGPLKITHGDETANAQQKPSKKVEENVLTEDTAEFTTTSSIPIPSRKTSLPSFHASMSFSQSPSNVTPTTIVSNAASSMPFAPPTLPAALPHHPHQHLHHHPHHKTLKPRSNSHSFTNSLNQDPIVRSNDEEKYGFIPKVFVRSRRSSFAYPQQVAITTTPSSPNSSHVLLSSKSRRGSLANWSRRSSFNVSSNNTSRRSSMILAPNSVSNIFNVNNSGSNTASTSNTNSRRESVIKKEFQQRLNNLSNSGGPTSNNGPIFPNSYTFMDLPHSSSVSSSSTLHKSKRGSFSGHSMKSSCNPTNLWSKDEDALLMENKKRNLSVMELSILLPQRTEVEIQWRLNALSSDADMLSPTHSPQKTLSKKTCPRMFKSGSTTDDDKGSDKEDVMGDGSNDDDEDNVDPLHRAKQSSNKTVFSSSSSNISSKDVSPDPIFSPDPADDSSNTSDAGSRCTITSDTSSSAATMNRTPNSKNPQDIALLNNFRSEAITPRPKPSSTTTSITTETTNNMINHSSSTTTTTNNSPLPSINTIFKDML.

A compositionally biased stretch (polar residues) spans 1–44; it reads MSISTSLNSASIHLSSMDTHPQLHSLTRQPHSSSTAMSKNEAQE. Residues 1–78 are disordered; that stretch reads MSISTSLNSA…SKNPSSWDPQ (78 aa). Over residues 45–74 the composition is skewed to low complexity; the sequence is SSPSLPASSSSSTSASASASSKNSSKNPSS. The HTH myb-type domain maps to 67–121; sequence NSSKNPSSWDPQDDLLLRHLKEVKKMGWKDISQYFPNRTPNACQFRWRRLKSGNL. A DNA-binding region (H-T-H motif) is located at residues 94 to 117; it reads WKDISQYFPNRTPNACQFRWRRLK. Residues 226–242 show a composition bias toward basic residues; it reads HHPHQHLHHHPHHKTLK. Disordered regions lie at residues 226 to 250, 293 to 332, 406 to 436, and 483 to 659; these read HHPH…SHSF, TTPS…NTSR, HSSS…CNPT, and ADML…NSPL. S245 and S247 each carry phosphoserine. Composition is skewed to low complexity over residues 295-307 and 316-332; these read PSSP…LLSS and NWSR…NTSR. Positions 425-436 are enriched in polar residues; the sequence is SGHSMKSSCNPT. Phosphoserine is present on S487. The residue at position 489 (T489) is a Phosphothreonine. Phosphoserine is present on S491. The segment covering 512 to 522 has biased composition (basic and acidic residues); it reads DDDKGSDKEDV. 2 stretches are compositionally biased toward low complexity: residues 544 to 561 and 587 to 598; these read SSNK…SSKD and TITSDTSSSAAT. Residues 599–608 show a composition bias toward polar residues; sequence MNRTPNSKNP. The segment covering 622 to 659 has biased composition (low complexity); it reads ITPRPKPSSTTTSITTETTNNMINHSSSTTTTTNNSPL.

This sequence belongs to the DOT6 family. Component of the RPD3C(L) complex composed of at least ASH1, CTI6, DEP1, DOT6, PHO23, RPD3, RXT2, RXT3, SAP30, SDS3, SIN3, TOD6; UME1 and UME6.

It is found in the nucleus. Component of the RPD3 histone deacetylase complex RPD3C(L) responsible for the deacetylation of lysine residues on the N-terminal part of the core histones (H2A, H2B, H3 and H4). Histone deacetylation gives a tag for epigenetic repression and plays an important role in transcriptional regulation, cell cycle progression and developmental events. DOT6 binds to sequences containing the core CGATG, which resembles the PAC (Polymerase A and C) motif. This is Transcriptional regulatory protein DOT6 (DOT6) from Saccharomyces cerevisiae (strain ATCC 204508 / S288c) (Baker's yeast).